Reading from the N-terminus, the 199-residue chain is Probable GTP-binding protein EngB (199 aa).

In terms of domain architecture, EngB-type G spans 24–197 (EGYEVIFAGR…GARLNTFFGY (174 aa)). Residues 32-39 (GRSNAGKS), 59-63 (GKTQH), 77-80 (DLPG), 144-147 (TKSD), and 176-178 (FSS) contribute to the GTP site. Residues S39 and T61 each coordinate Mg(2+).

It belongs to the TRAFAC class TrmE-Era-EngA-EngB-Septin-like GTPase superfamily. EngB GTPase family. Mg(2+) serves as cofactor.

Its function is as follows. Necessary for normal cell division and for the maintenance of normal septation. This Ruthia magnifica subsp. Calyptogena magnifica protein is Probable GTP-binding protein EngB.